Consider the following 416-residue polypeptide: MKLLGWMHRKLRSNNDVFKEFNTGGGGACNCITGLASPDHDNDYFSGDDAAHASPPVTAGDLFTFGGSGLLTIGTLGIAAVAIPSGGDDDDYDIDFEVDATSDDDGGFTVEDDDADVGGAVTPTFTFPAATAAEAVVATVEKAVAAVEAIAEKDDDTTTEDDLMVVSAELEKVLGGVDVASARVSFAMGGGVDCPLQGFLFGSPVSDVESRPEYLQAPRDSSGSCGGGGRRTSLGELFMRTRFADEKVALVAVAEGEDGVAGDDGAAAAGVGGDRAGKGGGYKTMKKRKVKDEKGGGGAAGGGMPATVTKSKFQKILQIFHRKVYPENTLLTRNLTKKSRNRGATDNGGGAVATGDPDGPLASPVLRCRKDHPMRGFGCCTNGAFGASSPGGNAEMNGNKSGHWIKTDADYLVLEL.

Residues 63–83 (FTFGGSGLLTIGTLGIAAVAI) traverse the membrane as a helical segment. Positions 69–75 (GLLTIGT) match the IGT motif motif. Disordered regions lie at residues 266 to 306 (AAAA…GMPA) and 337 to 361 (KKSRNRGATDNGGGAVATGDPDGPL). Positions 270–282 (GVGGDRAGKGGGY) are enriched in gly residues. Positions 278–295 (KGGGYKTMKKRKVKDEKG) match the Nuclear localization signal motif.

This sequence belongs to the LAZY family. As to expression, expressed specifically in the cells at the inner side of the vascular bundles of young leaf sheaths and peripheral cylinders of vascular bundles in the unelongated stems. Expressed in the leaf sheath pulvinus and the lamina joint.

Its subcellular location is the cell membrane. The protein localises to the nucleus. Involved in the regulation of shoot gravitropism and tiller angle through negative regulation of basipetal polar auxin transport (PAT). Acts as positive regulator of lateral auxin transport. Promotes vertical shoot growth. LAZY1 and TAC1 play opposite functions in the regulation of tiller growth angle. The polypeptide is Protein LAZY 1 (Oryza sativa subsp. japonica (Rice)).